Reading from the N-terminus, the 425-residue chain is Serine--tRNA ligase (425 aa).

Residue 230-232 (TAE) participates in L-serine binding. An ATP-binding site is contributed by 261 to 263 (RAE). Glutamate 284 lines the L-serine pocket. 348–351 (EISS) lines the ATP pocket. Serine 384 provides a ligand contact to L-serine.

This sequence belongs to the class-II aminoacyl-tRNA synthetase family. Type-1 seryl-tRNA synthetase subfamily. As to quaternary structure, homodimer. The tRNA molecule binds across the dimer.

The protein localises to the cytoplasm. It catalyses the reaction tRNA(Ser) + L-serine + ATP = L-seryl-tRNA(Ser) + AMP + diphosphate + H(+). The enzyme catalyses tRNA(Sec) + L-serine + ATP = L-seryl-tRNA(Sec) + AMP + diphosphate + H(+). It functions in the pathway aminoacyl-tRNA biosynthesis; selenocysteinyl-tRNA(Sec) biosynthesis; L-seryl-tRNA(Sec) from L-serine and tRNA(Sec): step 1/1. In terms of biological role, catalyzes the attachment of serine to tRNA(Ser). Is also able to aminoacylate tRNA(Sec) with serine, to form the misacylated tRNA L-seryl-tRNA(Sec), which will be further converted into selenocysteinyl-tRNA(Sec). The chain is Serine--tRNA ligase from Desulforudis audaxviator (strain MP104C).